We begin with the raw amino-acid sequence, 264 residues long: Tryptophan synthase alpha chain (264 aa).

Active-site proton acceptor residues include Glu-49 and Asp-60.

The protein belongs to the TrpA family. In terms of assembly, tetramer of two alpha and two beta chains.

The enzyme catalyses (1S,2R)-1-C-(indol-3-yl)glycerol 3-phosphate + L-serine = D-glyceraldehyde 3-phosphate + L-tryptophan + H2O. It functions in the pathway amino-acid biosynthesis; L-tryptophan biosynthesis; L-tryptophan from chorismate: step 5/5. Functionally, the alpha subunit is responsible for the aldol cleavage of indoleglycerol phosphate to indole and glyceraldehyde 3-phosphate. This Laribacter hongkongensis (strain HLHK9) protein is Tryptophan synthase alpha chain.